Here is a 616-residue protein sequence, read N- to C-terminus: Dihydroxy-acid dehydratase (616 aa).

Asp-81 serves as a coordination point for Mg(2+). Cys-122 provides a ligand contact to [2Fe-2S] cluster. Positions 123 and 124 each coordinate Mg(2+). Residue Lys-124 is modified to N6-carboxylysine. Residue Cys-195 coordinates [2Fe-2S] cluster. A Mg(2+)-binding site is contributed by Glu-491. Residue Ser-517 is the Proton acceptor of the active site.

It belongs to the IlvD/Edd family. Homodimer. [2Fe-2S] cluster is required as a cofactor. Requires Mg(2+) as cofactor.

The catalysed reaction is (2R)-2,3-dihydroxy-3-methylbutanoate = 3-methyl-2-oxobutanoate + H2O. It catalyses the reaction (2R,3R)-2,3-dihydroxy-3-methylpentanoate = (S)-3-methyl-2-oxopentanoate + H2O. It functions in the pathway amino-acid biosynthesis; L-isoleucine biosynthesis; L-isoleucine from 2-oxobutanoate: step 3/4. It participates in amino-acid biosynthesis; L-valine biosynthesis; L-valine from pyruvate: step 3/4. Functions in the biosynthesis of branched-chain amino acids. Catalyzes the dehydration of (2R,3R)-2,3-dihydroxy-3-methylpentanoate (2,3-dihydroxy-3-methylvalerate) into 2-oxo-3-methylpentanoate (2-oxo-3-methylvalerate) and of (2R)-2,3-dihydroxy-3-methylbutanoate (2,3-dihydroxyisovalerate) into 2-oxo-3-methylbutanoate (2-oxoisovalerate), the penultimate precursor to L-isoleucine and L-valine, respectively. This is Dihydroxy-acid dehydratase from Salmonella dublin (strain CT_02021853).